The sequence spans 327 residues: Phosphate acyltransferase (327 aa).

The protein belongs to the PlsX family. In terms of assembly, homodimer. Probably interacts with PlsY.

Its subcellular location is the cytoplasm. It carries out the reaction a fatty acyl-[ACP] + phosphate = an acyl phosphate + holo-[ACP]. It participates in lipid metabolism; phospholipid metabolism. Its function is as follows. Catalyzes the reversible formation of acyl-phosphate (acyl-PO(4)) from acyl-[acyl-carrier-protein] (acyl-ACP). This enzyme utilizes acyl-ACP as fatty acyl donor, but not acyl-CoA. This Mycoplasma mobile (strain ATCC 43663 / 163K / NCTC 11711) (Mesomycoplasma mobile) protein is Phosphate acyltransferase.